Consider the following 402-residue polypeptide: Selenoprotein P (402 aa).

Positions 1–19 are cleaved as a signal peptide; it reads MWRGLGLALALCLLLTGGT. Sec59 is a non-standard amino acid (selenocysteine). Residues Asn83 and Asn174 are each glycosylated (N-linked (GlcNAc...) asparagine). The tract at residues 196-291 is disordered; the sequence is KTAEASQRHH…VGSESLQPSL (96 aa). Basic residues predominate over residues 203-231; sequence RHHHPHPHSHPHPHPHPHPHPHPHPHHGH. Repeat copies occupy residues 204–205, 206–207, 208–209, 210–211, 212–213, 214–215, 216–217, 218–219, 220–221, 222–223, 224–225, 226–227, and 228–229. The 13 X 2 AA tandem repeats of H-[PHS] stretch occupies residues 204–229; it reads HHHPHPHSHPHPHPHPHPHPHPHPHH. Positions 232-247 are enriched in basic and acidic residues; it reads QLHENAHLSESPKPDT. The segment covering 259–269 has biased composition (basic residues); the sequence is LHHHHHRHKGP. At Ser284 the chain carries Phosphoserine. Non-standard amino acids (selenocysteine) are located at Sec297, Sec307, Sec338, Sec350, Sec363, Sec365, Sec372, Sec388, Sec390, Sec397, and Sec399. Positions 367–402 are disordered; the sequence is LPPAAUQAAGQQLNPTEASTKUSUKNKAKMUKUPSN.

The protein belongs to the selenoprotein P family. Post-translationally, phosphorylation sites are present in the extracellular medium. Brain and kidney. Most prominently expressed in the cerebellar cortex, hippocampus and olfactory bulb.

It localises to the secreted. Its function is as follows. Constitutes a major selenium pool in the brain and may play an important role in developing and/or modulating the morphology of neurons and/or glial cells. This Bos taurus (Bovine) protein is Selenoprotein P.